The sequence spans 517 residues: Protein ERGIC-53 (517 aa).

An N-terminal signal peptide occupies residues 1 to 30 (MAVSRRRVPQAGARSFFCALLLSFSQFTGS). Over 31 to 484 (DGTGGDAAAP…DLPPFPSCLS (454 aa)) the chain is Lumenal. Residues 52–275 (RRFEYKYSFK…DVLSFLTFQL (224 aa)) enclose the L-type lectin-like domain. A carbohydrate contacts are provided by Ser96 and Asp129. The Ca(2+) site is built by Asp160, Phe162, and Asn164. Asn164 and His186 together coordinate a carbohydrate. Asp189 provides a ligand contact to Ca(2+). Cys198 and Cys238 are joined by a disulfide. 259–261 (GGL) is a binding site for a carbohydrate. Ser433 carries the post-translational modification Phosphoserine. Residues 485–505 (TIHFVIFVVVQTVLFVGYIMY) form a helical membrane-spanning segment. Residues 506–517 (RTQQEAAAKKFF) lie on the Cytoplasmic side of the membrane. Residues 506–517 (RTQQEAAAKKFF) are mediates interaction with RAB3GAP1, RAB3GAP2 and UBXN6. Positions 516 to 517 (FF) match the ER export motif motif.

In terms of assembly, exists both as a covalent disulfide-linked homohexamer, and a complex of three disulfide-linked dimers non-covalently kept together. Interacts with MCFD2. May interact with TMEM115. Interacts with RAB3GAP1 and RAB3GAP2. Interacts with UBXN6. Interacts with SERPINA1/alpha1-antitrypsin. Interacts with BET1.

The protein resides in the endoplasmic reticulum-Golgi intermediate compartment membrane. It localises to the golgi apparatus membrane. The protein localises to the endoplasmic reticulum membrane. Functionally, mannose-specific lectin. May recognize sugar residues of glycoproteins, glycolipids, or glycosylphosphatidyl inositol anchors and may be involved in the sorting or recycling of proteins, lipids, or both. The LMAN1-MCFD2 complex forms a specific cargo receptor for the ER-to-Golgi transport of selected proteins. This chain is Protein ERGIC-53 (Lman1), found in Mus musculus (Mouse).